The sequence spans 259 residues: MTDLKASSLRALKLMDLTTLNDDDTDEKVIALCHQAKTPVGNTAAICIYPRFIPIARKTLKEQGTPEIRIATVTNFPHGNDDIDIALAETRAAIAYGADEVDVVFPYRALMAGNEQVGFDLVKACKEACAAANVLLKVIIETGELKDEALIRKASEISIKAGADFIKTSTGKVAVNATPESARIMMEVIRDMGVEKTVGFKPAGGVRTAEDAQKYLAIADELFGADWADARHYRFGASSLLASLLKALGHGDGKSASSY.

Asp-102 (proton donor/acceptor) is an active-site residue. Lys-167 (schiff-base intermediate with acetaldehyde) is an active-site residue. The Proton donor/acceptor role is filled by Lys-201.

It belongs to the DeoC/FbaB aldolase family. DeoC type 2 subfamily.

The protein localises to the cytoplasm. The enzyme catalyses 2-deoxy-D-ribose 5-phosphate = D-glyceraldehyde 3-phosphate + acetaldehyde. The protein operates within carbohydrate degradation; 2-deoxy-D-ribose 1-phosphate degradation; D-glyceraldehyde 3-phosphate and acetaldehyde from 2-deoxy-alpha-D-ribose 1-phosphate: step 2/2. Its function is as follows. Catalyzes a reversible aldol reaction between acetaldehyde and D-glyceraldehyde 3-phosphate to generate 2-deoxy-D-ribose 5-phosphate. In Escherichia coli O45:K1 (strain S88 / ExPEC), this protein is Deoxyribose-phosphate aldolase.